The primary structure comprises 309 residues: Tagatose-6-phosphate kinase (309 aa).

Belongs to the carbohydrate kinase PfkB family. LacC subfamily.

It catalyses the reaction D-tagatofuranose 6-phosphate + ATP = D-tagatofuranose 1,6-bisphosphate + ADP + H(+). The protein operates within carbohydrate metabolism; D-tagatose 6-phosphate degradation; D-glyceraldehyde 3-phosphate and glycerone phosphate from D-tagatose 6-phosphate: step 1/2. The sequence is that of Tagatose-6-phosphate kinase from Streptococcus pneumoniae serotype 4 (strain ATCC BAA-334 / TIGR4).